Consider the following 493-residue polypeptide: UPF0699 transmembrane protein YdbT (493 aa).

6 helical membrane-spanning segments follow: residues 18–38 (CHTI…VYIV), 46–66 (FYGA…SIIK), 188–208 (LMAA…FALI), 232–252 (IGIY…FSIA), 370–390 (VIFS…WGYL), and 393–413 (ILLP…AWTI).

The protein belongs to the UPF0699 family.

It localises to the cell membrane. The sequence is that of UPF0699 transmembrane protein YdbT (ydbT) from Bacillus subtilis (strain 168).